A 140-amino-acid polypeptide reads, in one-letter code: Nucleoside diphosphate kinase (140 aa).

Residues lysine 11, phenylalanine 59, arginine 87, threonine 93, arginine 104, and asparagine 114 each coordinate ATP. Histidine 117 (pros-phosphohistidine intermediate) is an active-site residue.

Belongs to the NDK family. Homotetramer. The cofactor is Mg(2+).

The protein resides in the cytoplasm. The catalysed reaction is a 2'-deoxyribonucleoside 5'-diphosphate + ATP = a 2'-deoxyribonucleoside 5'-triphosphate + ADP. The enzyme catalyses a ribonucleoside 5'-diphosphate + ATP = a ribonucleoside 5'-triphosphate + ADP. Major role in the synthesis of nucleoside triphosphates other than ATP. The ATP gamma phosphate is transferred to the NDP beta phosphate via a ping-pong mechanism, using a phosphorylated active-site intermediate. This is Nucleoside diphosphate kinase from Rhodopseudomonas palustris (strain HaA2).